We begin with the raw amino-acid sequence, 396 residues long: Pectinesterase (396 aa).

An N-terminal signal peptide occupies residues 1–21 (MQSKTLYLKATALLGGCTVFA). Threonine 174 provides a ligand contact to substrate. Aspartate 232 acts as the Proton donor in catalysis. Aspartate 259 serves as the catalytic Nucleophile. Residues arginine 324 and tryptophan 326 each contribute to the substrate site.

Belongs to the pectinesterase family.

The protein resides in the secreted. It carries out the reaction [(1-&gt;4)-alpha-D-galacturonosyl methyl ester](n) + n H2O = [(1-&gt;4)-alpha-D-galacturonosyl](n) + n methanol + n H(+). It functions in the pathway glycan metabolism; pectin degradation; 2-dehydro-3-deoxy-D-gluconate from pectin: step 1/5. In terms of biological role, involved in maceration and soft-rotting of plant tissue. This chain is Pectinesterase (pme), found in Ralstonia nicotianae (strain ATCC BAA-1114 / GMI1000) (Ralstonia solanacearum).